The primary structure comprises 291 residues: tRNA pseudouridine synthase B (291 aa).

The active-site Nucleophile is the Asp-41.

It belongs to the pseudouridine synthase TruB family. Type 1 subfamily.

It carries out the reaction uridine(55) in tRNA = pseudouridine(55) in tRNA. In terms of biological role, responsible for synthesis of pseudouridine from uracil-55 in the psi GC loop of transfer RNAs. The protein is tRNA pseudouridine synthase B of Parasynechococcus marenigrum (strain WH8102).